Consider the following 213-residue polypeptide: Thymidylate kinase (213 aa).

10–17 (GLEGAGKT) contacts ATP.

This sequence belongs to the thymidylate kinase family.

It catalyses the reaction dTMP + ATP = dTDP + ADP. Functionally, phosphorylation of dTMP to form dTDP in both de novo and salvage pathways of dTTP synthesis. The sequence is that of Thymidylate kinase from Escherichia coli O7:K1 (strain IAI39 / ExPEC).